Consider the following 251-residue polypeptide: tRNA (guanine-N(1)-)-methyltransferase (251 aa).

S-adenosyl-L-methionine-binding positions include Gly-113 and 133-138 (IGDYVL).

It belongs to the RNA methyltransferase TrmD family. In terms of assembly, homodimer.

It localises to the cytoplasm. It carries out the reaction guanosine(37) in tRNA + S-adenosyl-L-methionine = N(1)-methylguanosine(37) in tRNA + S-adenosyl-L-homocysteine + H(+). Specifically methylates guanosine-37 in various tRNAs. The chain is tRNA (guanine-N(1)-)-methyltransferase from Pectobacterium atrosepticum (strain SCRI 1043 / ATCC BAA-672) (Erwinia carotovora subsp. atroseptica).